Consider the following 316-residue polypeptide: MARFSPQDLADHLKDGLLSFPATAFQDDLEVDEAAYVEHIEWQSSYPVAGLFAAGGTGEGFSLTVEENHRVTQLAVQASSPEVPVLGSATGSTKSAIANAQGAEAAGAEGVLLLPPYLTECDAEGLYNHAAAVCESTSLGVIVYNRANAIYSPEVIARLSERYPNFIGFKDGTGNIEHLAKITTLCGDRLFYLGGLPTAETFALPLLQMGMSTYSSAMFNFIPDFALSFYADVRAQDSAAVKQKLSDFVLPYLDIRDRAQGYGVSIVKGGLKAVGRNAGGVRPPLRNLSEQDIADLSDLLATSGAGSYRLPVEVKA.

Belongs to the DapA family.

The enzyme catalyses 5-dehydro-4-deoxy-D-glucarate + H(+) = 2,5-dioxopentanoate + CO2 + H2O. It participates in carbohydrate acid metabolism; D-glucarate degradation; 2,5-dioxopentanoate from D-glucarate: step 2/2. The polypeptide is Probable 5-dehydro-4-deoxyglucarate dehydratase (Corynebacterium glutamicum (strain ATCC 13032 / DSM 20300 / JCM 1318 / BCRC 11384 / CCUG 27702 / LMG 3730 / NBRC 12168 / NCIMB 10025 / NRRL B-2784 / 534)).